A 542-amino-acid chain; its full sequence is Putative sodium-dependent excitatory amino acid transporter glt-6 (542 aa).

The Cytoplasmic segment spans residues 1-15 (MKSKRRDDIVQFCRE). 3 helical membrane passes run 16–36 (NTLLVMTMFSVFLGVVLGFGL), 55–75 (IFMQVLKMMILPLIFSSLISA), and 93–113 (LYYLSTAVLATILGIFLVTVI). At 114–191 (HPGDPSIKGT…IVKRSIGMTK (78 aa)) the chain is on the extracellular side. N-linked (GlcNAc...) asparagine glycosylation occurs at Asn-175. The next 5 membrane-spanning stretches (helical) occupy residues 192–212 (GMNILGIIVFCTGFGIVISQL), 234–254 (VVTLMWFAPLGITCLICGNLL), 265–285 (VLALYVFTVCAGLILHTIITV), 303–323 (GMIQAAVTAFGTASGGATLPM), and 386–406 (TIASIGLGSVPAGLVSILLIL). Over residues 505–517 (RIGSRIGSRRPSS) the composition is skewed to low complexity. Positions 505 to 542 (RIGSRIGSRRPSSTNLHLSWRNNNIEPPYTPLPNDENV) are disordered. The segment covering 518–529 (TNLHLSWRNNNI) has biased composition (polar residues).

Belongs to the dicarboxylate/amino acid:cation symporter (DAACS) (TC 2.A.23) family.

The protein localises to the membrane. This is Putative sodium-dependent excitatory amino acid transporter glt-6 (glt-6) from Caenorhabditis elegans.